A 37-amino-acid chain; its full sequence is QFTNVSCTTSKECWSVCEKLYNTSRGKCMNKKCRCYS.

Residue glutamine 1 is modified to Pyrrolidone carboxylic acid. 3 disulfide bridges follow: cysteine 7–cysteine 28, cysteine 13–cysteine 33, and cysteine 17–cysteine 35. The tract at residues 26-33 is interaction with Ca(2+)-activated K(+) channels; it reads GKCMNKKC.

This sequence belongs to the short scorpion toxin superfamily. Potassium channel inhibitor family. Alpha-KTx 01 subfamily. As to expression, expressed by the venom gland.

Its subcellular location is the secreted. Its function is as follows. Potent selective inhibitor of high conductance (maxi-K), different medium and small conductance calcium-activated potassium channels (KCa1.1/KCNMA1 and others), as well as a voltage-dependent potassium channel (Kv1.3/KCNA3&gt;Kv1.2/KCNA2&gt;Kv1.6/KCNA3&gt;&gt;Shaker/Sh). It blocks channel activity by a simple bimolecular inhibition process. Functionally, has a pH-specific antimicrobial activity against bacteria (B.subtilis, E.coli and S.aureus) and the fungus C.albicans. The polypeptide is Potassium channel toxin alpha-KTx 1.13 (Leiurus hebraeus (Hebrew deathstalker scorpion)).